A 68-amino-acid chain; its full sequence is Large ribosomal subunit protein uL29 (68 aa).

It belongs to the universal ribosomal protein uL29 family.

The sequence is that of Large ribosomal subunit protein uL29 from Finegoldia magna (strain ATCC 29328 / DSM 20472 / WAL 2508) (Peptostreptococcus magnus).